Reading from the N-terminus, the 326-residue chain is Biotin synthase (326 aa).

In terms of domain architecture, Radical SAM core spans 50 to 279 (FNGEKVDVEQ…ESVIKISGGR (230 aa)). C68, C72, and C75 together coordinate [4Fe-4S] cluster. Residues C112, C145, C204, and K274 each contribute to the [2Fe-2S] cluster site.

This sequence belongs to the radical SAM superfamily. Biotin synthase family. As to quaternary structure, homodimer. [4Fe-4S] cluster serves as cofactor. It depends on [2Fe-2S] cluster as a cofactor.

The catalysed reaction is (4R,5S)-dethiobiotin + (sulfur carrier)-SH + 2 reduced [2Fe-2S]-[ferredoxin] + 2 S-adenosyl-L-methionine = (sulfur carrier)-H + biotin + 2 5'-deoxyadenosine + 2 L-methionine + 2 oxidized [2Fe-2S]-[ferredoxin]. The protein operates within cofactor biosynthesis; biotin biosynthesis; biotin from 7,8-diaminononanoate: step 2/2. Its function is as follows. Catalyzes the conversion of dethiobiotin (DTB) to biotin by the insertion of a sulfur atom into dethiobiotin via a radical-based mechanism. The sequence is that of Biotin synthase from Nitrosopumilus maritimus (strain SCM1).